We begin with the raw amino-acid sequence, 258 residues long: 5'-nucleotidase SurE (258 aa).

A divalent metal cation contacts are provided by Asp9, Asp10, Ser42, and Asn96.

Belongs to the SurE nucleotidase family. A divalent metal cation serves as cofactor.

It is found in the cytoplasm. The catalysed reaction is a ribonucleoside 5'-phosphate + H2O = a ribonucleoside + phosphate. Nucleotidase that shows phosphatase activity on nucleoside 5'-monophosphates. The sequence is that of 5'-nucleotidase SurE from Campylobacter jejuni subsp. jejuni serotype O:2 (strain ATCC 700819 / NCTC 11168).